The chain runs to 417 residues: 4-hydroxy-3-methylbut-2-en-1-yl diphosphate synthase (flavodoxin) (417 aa).

[4Fe-4S] cluster-binding residues include cysteine 304, cysteine 307, cysteine 350, and glutamate 357.

The protein belongs to the IspG family. It depends on [4Fe-4S] cluster as a cofactor.

It carries out the reaction (2E)-4-hydroxy-3-methylbut-2-enyl diphosphate + oxidized [flavodoxin] + H2O + 2 H(+) = 2-C-methyl-D-erythritol 2,4-cyclic diphosphate + reduced [flavodoxin]. It functions in the pathway isoprenoid biosynthesis; isopentenyl diphosphate biosynthesis via DXP pathway; isopentenyl diphosphate from 1-deoxy-D-xylulose 5-phosphate: step 5/6. Functionally, converts 2C-methyl-D-erythritol 2,4-cyclodiphosphate (ME-2,4cPP) into 1-hydroxy-2-methyl-2-(E)-butenyl 4-diphosphate. This chain is 4-hydroxy-3-methylbut-2-en-1-yl diphosphate synthase (flavodoxin), found in Rhizobium rhizogenes (strain K84 / ATCC BAA-868) (Agrobacterium radiobacter).